A 79-amino-acid polypeptide reads, in one-letter code: RNA-binding protein Hfq (79 aa).

In terms of domain architecture, Sm spans 10–70; that stretch reads DAFLNHVRKT…ISTIMPAQPI (61 aa).

The protein belongs to the Hfq family. In terms of assembly, homohexamer.

Its function is as follows. RNA chaperone that binds small regulatory RNA (sRNAs) and mRNAs to facilitate mRNA translational regulation in response to envelope stress, environmental stress and changes in metabolite concentrations. Also binds with high specificity to tRNAs. This chain is RNA-binding protein Hfq, found in Ruegeria pomeroyi (strain ATCC 700808 / DSM 15171 / DSS-3) (Silicibacter pomeroyi).